A 468-amino-acid polypeptide reads, in one-letter code: Heat stress transcription factor A-1e (468 aa).

The DNA-binding element occupies 21–115; it reads IPPFLSKTYD…ILKSIVRRKP (95 aa). The hydrophobic repeat HR-A/B stretch occupies residues 133–199; it reads ACVEVGKFGL…QMMSFLAKAV (67 aa). A compositionally biased stretch (polar residues) spans 211–220; that stretch reads QSNEANQHIS. 2 disordered regions span residues 211–244 and 268–309; these read QSNE…VNGL and QMSN…PEVT. Positions 223 to 227 match the Nuclear localization signal motif; sequence NKKRR. Residues 277–305 are compositionally biased toward low complexity; that stretch reads SLSSNNGSFLLGDVPNSNISDNGSSSNGS. The AHA signature appears at 402–411; sequence DSFWEQFIGE. Residues 454–461 carry the Nuclear export signal motif; that stretch reads LTEQMGLL.

This sequence belongs to the HSF family. Class A subfamily. Homotrimer. Exhibits temperature-dependent phosphorylation.

Its subcellular location is the cytoplasm. The protein localises to the nucleus. Its function is as follows. Transcriptional activator that specifically binds DNA sequence 5'-AGAAnnTTCT-3' known as heat shock promoter elements (HSE). This Arabidopsis thaliana (Mouse-ear cress) protein is Heat stress transcription factor A-1e (HSFA1E).